A 423-amino-acid polypeptide reads, in one-letter code: UDP-N-acetylglucosamine 1-carboxyvinyltransferase 1 (423 aa).

23–24 (KN) lines the phosphoenolpyruvate pocket. Arg-96 is a binding site for UDP-N-acetyl-alpha-D-glucosamine. Catalysis depends on Cys-120, which acts as the Proton donor. Cys-120 bears the 2-(S-cysteinyl)pyruvic acid O-phosphothioketal mark. UDP-N-acetyl-alpha-D-glucosamine is bound by residues 125–129 (RPIDL), Asp-309, and Val-331.

The protein belongs to the EPSP synthase family. MurA subfamily.

It is found in the cytoplasm. The catalysed reaction is phosphoenolpyruvate + UDP-N-acetyl-alpha-D-glucosamine = UDP-N-acetyl-3-O-(1-carboxyvinyl)-alpha-D-glucosamine + phosphate. It functions in the pathway cell wall biogenesis; peptidoglycan biosynthesis. Cell wall formation. Adds enolpyruvyl to UDP-N-acetylglucosamine. The polypeptide is UDP-N-acetylglucosamine 1-carboxyvinyltransferase 1 (Streptococcus thermophilus (strain CNRZ 1066)).